The sequence spans 400 residues: Large envelope protein (400 aa).

The residue at position 1 (methionine 1) is an N-acetylmethionine. 2 disordered regions span residues methionine 1–phenylalanine 24 and proline 89–histidine 116. The N-myristoyl glycine; by host moiety is linked to residue glycine 2. A pre-S1 region spans residues glycine 2–alanine 119. The tract at residues glycine 2 to asparagine 174 is pre-S. Over glycine 2–glycine 181 the chain is Virion surface; in external conformation. Residues glycine 2–arginine 253 lie on the Intravirion; in internal conformation side of the membrane. Tryptophan 4 carries an N-linked (GlcNAc...) asparagine glycan. Positions serine 96–threonine 106 are enriched in polar residues. The interval methionine 120 to asparagine 174 is pre-S2. The helical transmembrane segment at phenylalanine 182–isoleucine 202 threads the bilayer. Topologically, residues proline 203–arginine 253 are intravirion; in external conformation. Residues phenylalanine 254–tyrosine 274 form a helical membrane-spanning segment. Residues glutamine 275 to serine 348 lie on the Virion surface side of the membrane. Residue asparagine 320 is glycosylated (N-linked (GlcNAc...) asparagine; by host). The helical transmembrane segment at leucine 349–isoleucine 369 threads the bilayer. The Intravirion segment spans residues tryptophan 370–tryptophan 375. The chain crosses the membrane as a helical span at residues glycine 376 to valine 398. Residues tyrosine 399 to isoleucine 400 are Virion surface-facing.

It belongs to the orthohepadnavirus major surface antigen family. In terms of assembly, in its internal form (Li-HBsAg), interacts with the capsid protein and with the isoform S. Interacts with host chaperone CANX. As to quaternary structure, associates with host chaperone CANX through its pre-S2 N glycan; this association may be essential for isoform M proper secretion. Interacts with isoform L. Interacts with the antigens of satellite virus HDV (HDVAgs); this interaction is required for encapsidation of HDV genomic RNA. Post-translationally, isoform M is N-terminally acetylated by host at a ratio of 90%, and N-glycosylated by host at the pre-S2 region. Myristoylated.

The protein localises to the virion membrane. Functionally, the large envelope protein exists in two topological conformations, one which is termed 'external' or Le-HBsAg and the other 'internal' or Li-HBsAg. In its external conformation the protein attaches the virus to cell receptors and thereby initiating infection. This interaction determines the species specificity and liver tropism. This attachment induces virion internalization predominantly through caveolin-mediated endocytosis. The large envelope protein also assures fusion between virion membrane and endosomal membrane. In its internal conformation the protein plays a role in virion morphogenesis and mediates the contact with the nucleocapsid like a matrix protein. In terms of biological role, the middle envelope protein plays an important role in the budding of the virion. It is involved in the induction of budding in a nucleocapsid independent way. In this process the majority of envelope proteins bud to form subviral lipoprotein particles of 22 nm of diameter that do not contain a nucleocapsid. The polypeptide is Large envelope protein (Hepatitis B virus genotype A1 subtype adw (isolate Philippines/pFDW294/1988) (HBV-A)).